Here is a 168-residue protein sequence, read N- to C-terminus: 3'-5' exoribonuclease MT2234.1 (168 aa).

Aspartate 6 contributes to the Mg(2+) binding site. The segment at 6-9 (DTEF) is RNA binding.

Homodimer. Requires Mg(2+) as cofactor.

Functionally, exonuclease that cleaves single-stranded 3' overhangs of double-stranded RNA. The polypeptide is 3'-5' exoribonuclease MT2234.1 (Mycobacterium tuberculosis (strain CDC 1551 / Oshkosh)).